Reading from the N-terminus, the 737-residue chain is Polyribonucleotide nucleotidyltransferase (737 aa).

D489 and D495 together coordinate Mg(2+). The 60-residue stretch at 556–615 (PKIDTIKIDVDKIKIVIGKGGETIDKIIAETGVKIDIDEEGNVSIYSSDQDAINRAKEII) folds into the KH domain. The 69-residue stretch at 625-693 (DEVYRAKVVR…EKGRIDASMK (69 aa)) folds into the S1 motif domain. A disordered region spans residues 691–737 (SMKALLPRPPKPEHDEKGEKSERPHRPRHQKDYKPKKEFTETPKDSE). Over residues 700–737 (PKPEHDEKGEKSERPHRPRHQKDYKPKKEFTETPKDSE) the composition is skewed to basic and acidic residues.

Belongs to the polyribonucleotide nucleotidyltransferase family. The cofactor is Mg(2+).

The protein resides in the cytoplasm. It catalyses the reaction RNA(n+1) + phosphate = RNA(n) + a ribonucleoside 5'-diphosphate. In terms of biological role, involved in mRNA degradation. Catalyzes the phosphorolysis of single-stranded polyribonucleotides processively in the 3'- to 5'-direction. This Streptococcus pneumoniae serotype 2 (strain D39 / NCTC 7466) protein is Polyribonucleotide nucleotidyltransferase.